The primary structure comprises 1002 residues: BTB/POZ domain-containing protein At1g04390 (1002 aa).

2 BTB domains span residues 680–758 and 808–889; these read SDMR…EVES and SDVI…PKPP.

Its pathway is protein modification; protein ubiquitination. May act as a substrate-specific adapter of an E3 ubiquitin-protein ligase complex (CUL3-RBX1-BTB) which mediates the ubiquitination and subsequent proteasomal degradation of target proteins. In Arabidopsis thaliana (Mouse-ear cress), this protein is BTB/POZ domain-containing protein At1g04390.